The following is a 147-amino-acid chain: Basic phospholipase A2 beta-bungarotoxin A4 chain (147 aa).

An N-terminal signal peptide occupies residues 1-19; the sequence is MNPAHLLVLSAVCVSLLGA. Positions 20–27 are excised as a propeptide; it reads ANIPPHPL. Cystine bridges form between cysteine 54–cysteine 146, cysteine 56–cysteine 72, cysteine 71–cysteine 127, cysteine 78–cysteine 120, cysteine 88–cysteine 113, and cysteine 106–cysteine 118. Ca(2+)-binding residues include tyrosine 55, glycine 57, and glycine 59. The active site involves histidine 75. Ca(2+) is bound at residue aspartate 76. Residue aspartate 121 is part of the active site.

The protein belongs to the phospholipase A2 family. Group I subfamily. D49 sub-subfamily. Heterodimer; disulfide-linked. The A chain has phospholipase A2 activity and the B chain shows homology with the basic protease inhibitors. It depends on Ca(2+) as a cofactor. As to expression, expressed by the venom gland.

It localises to the secreted. The enzyme catalyses a 1,2-diacyl-sn-glycero-3-phosphocholine + H2O = a 1-acyl-sn-glycero-3-phosphocholine + a fatty acid + H(+). Functionally, snake venom phospholipase A2 (PLA2) that shows presynaptic neurotoxicity. The A chain has phospholipase activity. PLA2 catalyzes the calcium-dependent hydrolysis of the 2-acyl groups in 3-sn-phosphoglycerides. The protein is Basic phospholipase A2 beta-bungarotoxin A4 chain of Bungarus candidus (Malayan krait).